Consider the following 85-residue polypeptide: Translation initiation factor IF-1 (85 aa).

An S1-like domain is found at 1 to 72 (MAKEELIEMH…SKGRITFRHI (72 aa)).

This sequence belongs to the IF-1 family. Component of the 30S ribosomal translation pre-initiation complex which assembles on the 30S ribosome in the order IF-2 and IF-3, IF-1 and N-formylmethionyl-tRNA(fMet); mRNA recruitment can occur at any time during PIC assembly.

The protein resides in the cytoplasm. In terms of biological role, one of the essential components for the initiation of protein synthesis. Stabilizes the binding of IF-2 and IF-3 on the 30S subunit to which N-formylmethionyl-tRNA(fMet) subsequently binds. Helps modulate mRNA selection, yielding the 30S pre-initiation complex (PIC). Upon addition of the 50S ribosomal subunit IF-1, IF-2 and IF-3 are released leaving the mature 70S translation initiation complex. This chain is Translation initiation factor IF-1, found in Polaromonas naphthalenivorans (strain CJ2).